The chain runs to 312 residues: Small ribosomal subunit protein uS2 (312 aa).

This sequence belongs to the universal ribosomal protein uS2 family. Component of the small ribosomal subunit. Mature ribosomes consist of a small (40S) and a large (60S) subunit. The 40S subunit contains about 33 different proteins and 1 molecule of RNA (18S). The 60S subunit contains about 49 different proteins and 3 molecules of RNA (25S, 5.8S and 5S). Interacts with ribosomal protein S21.

Its subcellular location is the cytoplasm. Its function is as follows. Required for the assembly and/or stability of the 40S ribosomal subunit. Required for the processing of the 20S rRNA-precursor to mature 18S rRNA in a late step of the maturation of 40S ribosomal subunits. The chain is Small ribosomal subunit protein uS2 from Vitis vinifera (Grape).